Consider the following 179-residue polypeptide: Large ribosomal subunit protein uL5 (179 aa).

It belongs to the universal ribosomal protein uL5 family. In terms of assembly, part of the 50S ribosomal subunit; part of the 5S rRNA/L5/L18/L25 subcomplex. Contacts the 5S rRNA and the P site tRNA. Forms a bridge to the 30S subunit in the 70S ribosome.

Its function is as follows. This is one of the proteins that bind and probably mediate the attachment of the 5S RNA into the large ribosomal subunit, where it forms part of the central protuberance. In the 70S ribosome it contacts protein S13 of the 30S subunit (bridge B1b), connecting the 2 subunits; this bridge is implicated in subunit movement. Contacts the P site tRNA; the 5S rRNA and some of its associated proteins might help stabilize positioning of ribosome-bound tRNAs. This is Large ribosomal subunit protein uL5 from Paramagnetospirillum magneticum (strain ATCC 700264 / AMB-1) (Magnetospirillum magneticum).